A 488-amino-acid polypeptide reads, in one-letter code: Prostaglandin E2 receptor EP4 subtype (488 aa).

Residues 1 to 19 (MSTPGVNSSASLSPDRLNS) are Extracellular-facing. N7 carries N-linked (GlcNAc...) asparagine glycosylation. The chain crosses the membrane as a helical span at residues 20-43 (PVTIPAVMFIFGVVGNLVAIVVLC). Residues 44-55 (KSRKEQKETTFY) lie on the Cytoplasmic side of the membrane. Residues 56–79 (TLVCGLAVTDLLGTLLVSPVTIAT) traverse the membrane as a helical segment. Over 80 to 96 (YMKGQWPGGQPLCEYST) the chain is Extracellular. A disulfide bridge connects residues C92 and C170. The helical transmembrane segment at 97–115 (FILLFFSLSGLSIICAMSV) threads the bilayer. Residues 116 to 135 (ERYLAINHAYFYSHYVDKRL) lie on the Cytoplasmic side of the membrane. The chain crosses the membrane as a helical span at residues 136–160 (AGLTLFAVYASNVLFCALPNMGLGS). The Extracellular segment spans residues 161–184 (SRLQYPDTWCFIDWTTNVTAHAAY). Residues 185–211 (SYMYAGFSSFLILATVLCNVLVCGALL) form a helical membrane-spanning segment. At 212–267 (RMHRQFMRRTSLGTEQHHAAAAASVASRGHPAASPALPRLSDFRRRRSFRRIAGAE) the chain is on the cytoplasmic side. A helical membrane pass occupies residues 268 to 295 (IQMVILLIATSLVVLICSIPLVVRVFVN). Topologically, residues 296–312 (QLYQPSLEREVSKNPDL) are extracellular. The helical transmembrane segment at 313-332 (QAIRIASVNPILDPWIYILL) threads the bilayer. The Cytoplasmic segment spans residues 333–488 (RKTVLSKAIE…ETLNLSEKCI (156 aa)). The interval 356–376 (RERSGQHCSDSQRTSSAMSGH) is disordered. The span at 361–376 (QHCSDSQRTSSAMSGH) shows a compositional bias: polar residues. Residues S374, S377, S379, and S382 each carry the phosphoserine modification. Polar residues predominate over residues 437 to 449 (SETSDSSQGQDSE). A disordered region spans residues 437–475 (SETSDSSQGQDSESVLLVDEAGGSGRAGPAPKGSSLQVT).

It belongs to the G-protein coupled receptor 1 family. Interacts with FEM1A. Phosphorylation mediates agonist-mediated desensitization by promoting cytoplasmic retention. High in intestine and in peripheral blood mononuclear cells; low in lung, kidney, thymus, uterus, vasculature and brain. Not found in liver, heart, retina oe skeletal muscle.

The protein localises to the cell membrane. Its function is as follows. Receptor for prostaglandin E2 (PGE2). The activity of this receptor is mediated by G(s) proteins that stimulate adenylate cyclase. Has a relaxing effect on smooth muscle. May play an important role in regulating renal hemodynamics, intestinal epithelial transport, adrenal aldosterone secretion, and uterine function. In Homo sapiens (Human), this protein is Prostaglandin E2 receptor EP4 subtype (PTGER4).